Reading from the N-terminus, the 504-residue chain is ATP synthase subunit alpha (504 aa).

Residue glycine 169–threonine 176 participates in ATP binding.

The protein belongs to the ATPase alpha/beta chains family. In terms of assembly, F-type ATPases have 2 components, CF(1) - the catalytic core - and CF(0) - the membrane proton channel. CF(1) has five subunits: alpha(3), beta(3), gamma(1), delta(1), epsilon(1). CF(0) has three main subunits: a(1), b(2) and c(9-12). The alpha and beta chains form an alternating ring which encloses part of the gamma chain. CF(1) is attached to CF(0) by a central stalk formed by the gamma and epsilon chains, while a peripheral stalk is formed by the delta and b chains.

Its subcellular location is the cell membrane. The catalysed reaction is ATP + H2O + 4 H(+)(in) = ADP + phosphate + 5 H(+)(out). Produces ATP from ADP in the presence of a proton gradient across the membrane. The alpha chain is a regulatory subunit. In Clostridium botulinum (strain ATCC 19397 / Type A), this protein is ATP synthase subunit alpha.